The primary structure comprises 219 residues: Small ribosomal subunit protein uS3c (219 aa).

Residues 47-119 (VRKYVRTAEN…KFIISLAEVE (73 aa)) enclose the KH type-2 domain.

It belongs to the universal ribosomal protein uS3 family. In terms of assembly, part of the 30S ribosomal subunit.

The protein localises to the plastid. Its subcellular location is the chloroplast. The sequence is that of Small ribosomal subunit protein uS3c (rps3) from Staurastrum punctulatum (Green alga).